The chain runs to 165 residues: Crossover junction endodeoxyribonuclease RuvC (165 aa).

Catalysis depends on residues D8, E67, and D139. 3 residues coordinate Mg(2+): D8, E67, and D139.

Belongs to the RuvC family. In terms of assembly, homodimer which binds Holliday junction (HJ) DNA. The HJ becomes 2-fold symmetrical on binding to RuvC with unstacked arms; it has a different conformation from HJ DNA in complex with RuvA. In the full resolvosome a probable DNA-RuvA(4)-RuvB(12)-RuvC(2) complex forms which resolves the HJ. Mg(2+) is required as a cofactor.

The protein resides in the cytoplasm. The enzyme catalyses Endonucleolytic cleavage at a junction such as a reciprocal single-stranded crossover between two homologous DNA duplexes (Holliday junction).. The RuvA-RuvB-RuvC complex processes Holliday junction (HJ) DNA during genetic recombination and DNA repair. Endonuclease that resolves HJ intermediates. Cleaves cruciform DNA by making single-stranded nicks across the HJ at symmetrical positions within the homologous arms, yielding a 5'-phosphate and a 3'-hydroxyl group; requires a central core of homology in the junction. The consensus cleavage sequence is 5'-(A/T)TT(C/G)-3'. Cleavage occurs on the 3'-side of the TT dinucleotide at the point of strand exchange. HJ branch migration catalyzed by RuvA-RuvB allows RuvC to scan DNA until it finds its consensus sequence, where it cleaves and resolves the cruciform DNA. This is Crossover junction endodeoxyribonuclease RuvC from Alkalilimnicola ehrlichii (strain ATCC BAA-1101 / DSM 17681 / MLHE-1).